The primary structure comprises 403 residues: Pantothenate kinase (403 aa).

Residues S80, S82, and S84 each carry the phosphoserine modification.

The protein belongs to the type II pantothenate kinase family.

The protein localises to the cytoplasm. It is found in the nucleus. It catalyses the reaction (R)-pantothenate + ATP = (R)-4'-phosphopantothenate + ADP + H(+). It participates in cofactor biosynthesis; coenzyme A biosynthesis; CoA from (R)-pantothenate: step 1/5. Regulated by feedback inhibition by malonyl-CoA. In terms of biological role, plays a role in the physiological regulation of the intracellular CoA concentration. This is Pantothenate kinase from Schizosaccharomyces pombe (strain 972 / ATCC 24843) (Fission yeast).